A 161-amino-acid polypeptide reads, in one-letter code: Protein-export protein SecB (161 aa).

This sequence belongs to the SecB family. Homotetramer, a dimer of dimers. One homotetramer interacts with 1 SecA dimer.

It is found in the cytoplasm. Functionally, one of the proteins required for the normal export of preproteins out of the cell cytoplasm. It is a molecular chaperone that binds to a subset of precursor proteins, maintaining them in a translocation-competent state. It also specifically binds to its receptor SecA. The chain is Protein-export protein SecB from Afipia carboxidovorans (strain ATCC 49405 / DSM 1227 / KCTC 32145 / OM5) (Oligotropha carboxidovorans).